The sequence spans 308 residues: tRNA dimethylallyltransferase (308 aa).

ATP is bound at residue 14–21 (GPTASGKT). 16–21 (TASGKT) is a substrate binding site. Interaction with substrate tRNA stretches follow at residues 39-42 (DSAL), 163-167 (QRLSR), and 244-249 (RCVGYR).

This sequence belongs to the IPP transferase family. As to quaternary structure, monomer. The cofactor is Mg(2+).

The catalysed reaction is adenosine(37) in tRNA + dimethylallyl diphosphate = N(6)-dimethylallyladenosine(37) in tRNA + diphosphate. In terms of biological role, catalyzes the transfer of a dimethylallyl group onto the adenine at position 37 in tRNAs that read codons beginning with uridine, leading to the formation of N6-(dimethylallyl)adenosine (i(6)A). The polypeptide is tRNA dimethylallyltransferase (Shewanella baltica (strain OS185)).